The sequence spans 579 residues: Effector protein HopAB3 (579 aa).

3 disordered regions span residues 1–140, 214–294, and 384–408; these read MAGI…TGAV, VRQQ…NQVP, and PARA…PDSA. The host recognition; Pto interaction stretch occupies residues 1-336; that stretch reads MAGINGAGPS…LRAALERHIL (336 aa). 5 stretches are compositionally biased toward low complexity: residues 23-39, 89-101, 219-248, 266-281, and 384-402; these read ASGG…SSNS, RPQE…APQA, ASAP…ESSS, NQRR…ASQR, and PARA…ATVS. The E3 ubiquitin-protein ligase stretch occupies residues 337-579; the sequence is HRRPIPMDIA…IAKYAFRIVP (243 aa).

This sequence belongs to the HopAB family. In terms of assembly, interacts physically with plant cell Pto. In terms of processing, auto-ubiquitinated.

It is found in the secreted. Effector protein involved in gene-for-gene resistance in tomato plants. It is recognized by the host Pto resistance protein and elicits Pto and Prf-dependent hypersensitive response (HR) and programmed cell death (PCD), resulting in host immunity. In susceptible plants, acts as a virulence factor by suppressing PCD and HR-based plant immunity. This function requires its E3 ubiquitin ligase activity probably by recruiting E2 enzymes and transferring ubiquitin molecules to cellular proteins involved in regulation of PCD and targeting them for degradation. Enhances the development of disease symptoms and bacterial growth. This chain is Effector protein HopAB3 (hopAB3), found in Pseudomonas syringae pv. tomato.